The following is a 51-amino-acid chain: UPF0181 protein VV2_0310 (51 aa).

This sequence belongs to the UPF0181 family.

The sequence is that of UPF0181 protein VV2_0310 from Vibrio vulnificus (strain CMCP6).